A 342-amino-acid polypeptide reads, in one-letter code: P2Y purinoceptor 12 (342 aa).

The Extracellular segment spans residues 1-27; it reads MQAVDNLTSAPGNTSLCTRDYKITQVL. N-linked (GlcNAc...) asparagine glycans are attached at residues asparagine 6 and asparagine 13. Cystine bridges form between cysteine 17/cysteine 270 and cysteine 97/cysteine 175. A helical membrane pass occupies residues 28 to 50; that stretch reads FPLLYTVLFFVGLITNGLAMRIF. The Cytoplasmic segment spans residues 51 to 61; that stretch reads FQIRSKSNFII. A phosphoserine mark is found at serine 55 and serine 57. A helical membrane pass occupies residues 62-82; that stretch reads FLKNTVISDLLMILTFPFKIL. Over 83 to 97 the chain is Extracellular; sequence SDAKLGTGPLRTFVC. Residues arginine 93, cysteine 97, and tyrosine 105 each contribute to the ADP site. Residues 98-118 traverse the membrane as a helical segment; the sequence is QVTSVIFYFTMYISISFLGLI. The Cytoplasmic portion of the chain corresponds to 119-142; the sequence is TIDRYQKTTRPFKTSNPKNLLGAK. A helical membrane pass occupies residues 143–162; that stretch reads ILSVVIWAFMFLLSLPNMIL. ADP-binding positions include 156-159, 175-179, histidine 187, and asparagine 191; these read SLPN and CSFLK. Residues 163 to 185 are Extracellular-facing; sequence TNRQPRDKNVKKCSFLKSEFGLV. The chain crosses the membrane as a helical span at residues 186 to 207; that stretch reads WHEIVNYICQVIFWINFLIVIV. Residues 208–233 are Cytoplasmic-facing; sequence CYTLITKELYRSYVRTRGVGKVPRKK. The helical transmembrane segment at 234-259 threads the bilayer; sequence VNVKVFIIIAVFFICFVPFHFARIPY. ADP is bound by residues 256-259, glutamine 263, and lysine 280; that span reads RIPY. Topologically, residues 260–278 are extracellular; it reads TLSQTRDVFDCTAENTLFY. Residues 279–298 form a helical membrane-spanning segment; the sequence is VKESTLWLTSLNACLDPFIY. Residues 299-342 lie on the Cytoplasmic side of the membrane; the sequence is FFLCKSFRNSLISMLKCPNSATSLSQDNRKKEQDGGDPNEETPM. Residues 319–342 are disordered; it reads ATSLSQDNRKKEQDGGDPNEETPM. A compositionally biased stretch (acidic residues) spans 333-342; that stretch reads GGDPNEETPM.

It belongs to the G-protein coupled receptor 1 family. Highly expressed in the platelets, lower levels in the brain. Lowest levels in the lung, appendix, pituitary and adrenal gland. Expressed in the spinal cord and in the fetal brain.

It is found in the cell membrane. Receptor for ADP and ATP coupled to G-proteins that inhibit the adenylyl cyclase second messenger system. Not activated by UDP and UTP. Required for normal platelet aggregation and blood coagulation. The polypeptide is P2Y purinoceptor 12 (P2RY12) (Homo sapiens (Human)).